The following is a 215-amino-acid chain: Pyrrolidone-carboxylate peptidase (215 aa).

Catalysis depends on residues Glu80, Cys143, and His167.

It belongs to the peptidase C15 family. Homotetramer.

The protein resides in the cytoplasm. It catalyses the reaction Release of an N-terminal pyroglutamyl group from a polypeptide, the second amino acid generally not being Pro.. Functionally, removes 5-oxoproline from various penultimate amino acid residues except L-proline. This chain is Pyrrolidone-carboxylate peptidase, found in Bacillus anthracis.